Consider the following 224-residue polypeptide: PKHD-type hydroxylase Shewmr7_0698 (224 aa).

In terms of domain architecture, Fe2OG dioxygenase spans 78–176; sequence QFYPPLFNRY…RTAAFMWLQS (99 aa). Residues H96, D98, and H157 each coordinate Fe cation. Residue R167 coordinates 2-oxoglutarate.

The cofactor is Fe(2+). L-ascorbate serves as cofactor.

In Shewanella sp. (strain MR-7), this protein is PKHD-type hydroxylase Shewmr7_0698.